The following is a 327-amino-acid chain: MHSKSRITAIGTYVPDQILSNNDLEKMVHTNDEWIVQRTGMRERRIASEEEYSSNLAIKAIENLCTTYKKNLEDVDCIIVATTTADYVFPSVACQIQQYFNIPHTLAFDLNATCAGFTYGLHVGNSLITSESHEKVLVVATETLSKVTDYTDRTTCILFGDGAGAILLERDENTPSFIAAHMGTNGDGGIHLYRTNLSTTMNGTPLQTNEKIVQNGREVYKWATRTVPKGIKNLLHTVNMQVDDIDWFIPHSANLRMIESICEKSQIPIQKTLTSVEYMGNTSSVTIPLALNLAIKEGKLNNGDTLLLYGFGGGLTHLGLIVEWNLI.

Catalysis depends on residues C114 and H251. The ACP-binding stretch occupies residues S252–R256. Residue N281 is part of the active site.

It belongs to the thiolase-like superfamily. FabH family. Homodimer.

It is found in the cytoplasm. It carries out the reaction malonyl-[ACP] + acetyl-CoA + H(+) = 3-oxobutanoyl-[ACP] + CO2 + CoA. It functions in the pathway lipid metabolism; fatty acid biosynthesis. In terms of biological role, catalyzes the condensation reaction of fatty acid synthesis by the addition to an acyl acceptor of two carbons from malonyl-ACP. Catalyzes the first condensation reaction which initiates fatty acid synthesis and may therefore play a role in governing the total rate of fatty acid production. Possesses both acetoacetyl-ACP synthase and acetyl transacylase activities. Its substrate specificity determines the biosynthesis of branched-chain and/or straight-chain of fatty acids. The protein is Beta-ketoacyl-[acyl-carrier-protein] synthase III 2 of Bacillus cereus (strain ATCC 14579 / DSM 31 / CCUG 7414 / JCM 2152 / NBRC 15305 / NCIMB 9373 / NCTC 2599 / NRRL B-3711).